The following is a 158-amino-acid chain: Transcription elongation factor GreA (158 aa).

This sequence belongs to the GreA/GreB family.

In terms of biological role, necessary for efficient RNA polymerase transcription elongation past template-encoded arresting sites. The arresting sites in DNA have the property of trapping a certain fraction of elongating RNA polymerases that pass through, resulting in locked ternary complexes. Cleavage of the nascent transcript by cleavage factors such as GreA or GreB allows the resumption of elongation from the new 3'terminus. GreA releases sequences of 2 to 3 nucleotides. This is Transcription elongation factor GreA from Macrococcus caseolyticus (strain JCSC5402) (Macrococcoides caseolyticum).